A 266-amino-acid chain; its full sequence is Luciferase (266 aa).

Residues 22–41 (GLATACCAVAVASAIAFPYI) form a helical membrane-spanning segment.

The protein belongs to the fungal luciferase family.

The protein resides in the membrane. The catalysed reaction is 3-hydroxyhispidin + O2 = (E)-caffeoylpyruvate + hnu + CO2. It catalyses the reaction 3-hydroxyhispidin + O2 = 4-[(E)-2-(3,4-dihydroxyphenyl)ethenyl]-1,7-dihydroxy-2,3,5-trioxabicyclo[2.2.2]oct-7-en-6-one. In terms of biological role, luciferase; part of the gene cluster that mediates the fungal bioluminescence cycle. Uses the fungal luciferin 3-hydroxyhispidin as a substrate to produce an endoperoxide as a high-energy intermediate with decomposition that yields oxyluciferin (also known as caffeoylpyruvate) and light emission. The fungal bioluminescence cycle begins with the hispidin synthetase that catalyzes the formation of hispidin which is further hydroxylated by the hispidin-3-hydroxylase, yielding the fungal luciferin 3-hydroxyhispidin. The luciferase then produces an endoperoxide as a high-energy intermediate with decomposition that yields oxyluciferin and light emission. Oxyluciferin can be recycled to caffeic acid by caffeoylpyruvate hydrolase. This Armillaria ostoyae (Armillaria root rot fungus) protein is Luciferase.